The following is a 172-amino-acid chain: Crossover junction endodeoxyribonuclease RuvC (172 aa).

Catalysis depends on residues aspartate 11, glutamate 70, and aspartate 142. 3 residues coordinate Mg(2+): aspartate 11, glutamate 70, and aspartate 142.

It belongs to the RuvC family. In terms of assembly, homodimer which binds Holliday junction (HJ) DNA. The HJ becomes 2-fold symmetrical on binding to RuvC with unstacked arms; it has a different conformation from HJ DNA in complex with RuvA. In the full resolvosome a probable DNA-RuvA(4)-RuvB(12)-RuvC(2) complex forms which resolves the HJ. Requires Mg(2+) as cofactor.

It localises to the cytoplasm. The catalysed reaction is Endonucleolytic cleavage at a junction such as a reciprocal single-stranded crossover between two homologous DNA duplexes (Holliday junction).. Functionally, the RuvA-RuvB-RuvC complex processes Holliday junction (HJ) DNA during genetic recombination and DNA repair. Endonuclease that resolves HJ intermediates. Cleaves cruciform DNA by making single-stranded nicks across the HJ at symmetrical positions within the homologous arms, yielding a 5'-phosphate and a 3'-hydroxyl group; requires a central core of homology in the junction. The consensus cleavage sequence is 5'-(A/T)TT(C/G)-3'. Cleavage occurs on the 3'-side of the TT dinucleotide at the point of strand exchange. HJ branch migration catalyzed by RuvA-RuvB allows RuvC to scan DNA until it finds its consensus sequence, where it cleaves and resolves the cruciform DNA. The polypeptide is Crossover junction endodeoxyribonuclease RuvC (Hydrogenovibrio crunogenus (strain DSM 25203 / XCL-2) (Thiomicrospira crunogena)).